We begin with the raw amino-acid sequence, 507 residues long: ATP synthase subunit alpha, chloroplastic (507 aa).

Position 170-177 (170-177 (GDRQTGKT)) interacts with ATP. A Phosphothreonine modification is found at Thr257.

The protein belongs to the ATPase alpha/beta chains family. F-type ATPases have 2 components, CF(1) - the catalytic core - and CF(0) - the membrane proton channel. CF(1) has five subunits: alpha(3), beta(3), gamma(1), delta(1), epsilon(1). CF(0) has four main subunits: a, b, b' and c.

It is found in the plastid. Its subcellular location is the chloroplast thylakoid membrane. The catalysed reaction is ATP + H2O + 4 H(+)(in) = ADP + phosphate + 5 H(+)(out). In terms of biological role, produces ATP from ADP in the presence of a proton gradient across the membrane. The alpha chain is a regulatory subunit. The polypeptide is ATP synthase subunit alpha, chloroplastic (Lepidium virginicum (Virginia pepperweed)).